The sequence spans 157 residues: NADPH-dependent 7-cyano-7-deazaguanine reductase (157 aa).

The active-site Thioimide intermediate is the C55. D62 (proton donor) is an active-site residue. Residues V77–S79 and H96–E97 each bind substrate.

Belongs to the GTP cyclohydrolase I family. QueF type 1 subfamily.

It localises to the cytoplasm. It carries out the reaction 7-aminomethyl-7-carbaguanine + 2 NADP(+) = 7-cyano-7-deazaguanine + 2 NADPH + 3 H(+). The protein operates within tRNA modification; tRNA-queuosine biosynthesis. Functionally, catalyzes the NADPH-dependent reduction of 7-cyano-7-deazaguanine (preQ0) to 7-aminomethyl-7-deazaguanine (preQ1). This chain is NADPH-dependent 7-cyano-7-deazaguanine reductase, found in Neisseria meningitidis serogroup B (strain ATCC BAA-335 / MC58).